We begin with the raw amino-acid sequence, 227 residues long: Ribonuclease 3 (227 aa).

Positions 4–133 (FETLEKLLGY…LIAAIYLDSN (130 aa)) constitute an RNase III domain. A Mg(2+)-binding site is contributed by Glu46. Asp50 is a catalytic residue. Residues Asn119 and Glu122 each contribute to the Mg(2+) site. Glu122 is a catalytic residue. Residues 158–226 (DPKTALQEWA…ARDLLHRLQD (69 aa)) enclose the DRBM domain.

It belongs to the ribonuclease III family. As to quaternary structure, homodimer. Mg(2+) serves as cofactor.

The protein resides in the cytoplasm. It carries out the reaction Endonucleolytic cleavage to 5'-phosphomonoester.. Its function is as follows. Digests double-stranded RNA. Involved in the processing of primary rRNA transcript to yield the immediate precursors to the large and small rRNAs (23S and 16S). Processes some mRNAs, and tRNAs when they are encoded in the rRNA operon. Processes pre-crRNA and tracrRNA of type II CRISPR loci if present in the organism. This Rickettsia akari (strain Hartford) protein is Ribonuclease 3.